The following is a 191-amino-acid chain: MKAYTAAGLDEVGRGALFGPVFAGAVILDNQAEDQLIDAGLKDSKKLSALKRSNLVPLIKKISHCWAIGQSSAREIDLLGIRNATEKAMIRAVHRLEKQPDVLLIDGCLNLRLWHGEQKTVIKGEDLYPSIAAASVLAKVARDDLIKRMAEKYPQYGLEKHVGYGTALHRAAISKFGKTKLHRKTFLSKIQ.

The RNase H type-2 domain maps to 4–191 (YTAAGLDEVG…HRKTFLSKIQ (188 aa)). D10, E11, and D106 together coordinate a divalent metal cation.

The protein belongs to the RNase HII family. Requires Mn(2+) as cofactor. It depends on Mg(2+) as a cofactor.

Its subcellular location is the cytoplasm. It catalyses the reaction Endonucleolytic cleavage to 5'-phosphomonoester.. Its function is as follows. Endonuclease that specifically degrades the RNA of RNA-DNA hybrids. The polypeptide is Ribonuclease HII (Prochlorococcus marinus (strain SARG / CCMP1375 / SS120)).